We begin with the raw amino-acid sequence, 571 residues long: MAKRGKKGGIPRAEMVQVASANRDENQVTELKKADYLPYLFNLVMPKMFFKSPNRIVMARLYPDVHKHDQQSAEYFEGFQAPCFDLPASLFPDNAPIDKIVFMPTVMLPMGFEAGGVFGPGVLPRDCYPVDLIRTEHEGPMPPLFVGLRSMNISLASMIDSFLDMYDNPEGEDAFVYEMHATDHHYDDDITEELMLRPDFTLSVAYSLPATMRLPSPYPYPCVQAQDNIYTPDLSKVLMLMPHQLNITVSILSTVNNPHVPSVAFATMCDEEECPTFDLPTDVFPICEGVNRPIFLPKRFMPKGFEACCVFKPGSLSELWFIKRIGRFGTPQQQHNCTITPPLFVGKYSRDGECTDMIEEIRMNFDKKARESAKSIASLTLETLGGLSRHITSTKGFLVMESDKPTPPAGAYSVESYEEASEDGCIAKVTKECASKITDTRDDGINTADYQSQFPELEPEPEPEPEDEGEDVANKKKCLSCFKIDSDIDVMSHAIAELTVAELSMLGEENPVPGVDTELALDQLREVLENRGEIRSNTDDLMRDHIYRMERDLMLALRQPIRKCCECTVNF.

The segment at 440-472 (TRDDGINTADYQSQFPELEPEPEPEPEDEGEDV) is disordered. Over residues 457–471 (LEPEPEPEPEDEGED) the composition is skewed to acidic residues.

This sequence belongs to the DM7 family.

The chain is DM7 family protein CG15332 from Drosophila melanogaster (Fruit fly).